A 280-amino-acid polypeptide reads, in one-letter code: Phospholipase C D (280 aa).

The segment at 258–280 is disordered; that stretch reads VPDPQIMPTQETTPTRGIPSGPC.

Belongs to the bacterial phospholipase C family.

Its subcellular location is the secreted. The protein localises to the cell wall. The catalysed reaction is a 1,2-diacyl-sn-glycero-3-phosphocholine + H2O = phosphocholine + a 1,2-diacyl-sn-glycerol + H(+). It catalyses the reaction 1,2-dihexadecanoyl-sn-glycero-3-phosphocholine + H2O = 1,2-dihexadecanoyl-sn-glycerol + phosphocholine + H(+). Its function is as follows. Involved in virulence. Induces cytotoxic effects on mouse macrophage cell lines, via direct or indirect enzymatic hydrolysis of cell membrane phospholipids. Hydrolyzes phosphatidylcholine. Does not have hemolytic activity. The polypeptide is Phospholipase C D (Mycobacterium tuberculosis (strain ATCC 25618 / H37Rv)).